Here is a 764-residue protein sequence, read N- to C-terminus: 5-methyltetrahydropteroyltriglutamate--homocysteine methyltransferase (764 aa).

5-methyltetrahydropteroyltri-L-glutamate-binding positions include 16–19 (RELK) and Lys-121. L-homocysteine-binding positions include 440 to 442 (IGS) and Glu-493. Residues 440-442 (IGS) and Glu-493 contribute to the L-methionine site. Residues 524-525 (RC) and Trp-570 contribute to the 5-methyltetrahydropteroyltri-L-glutamate site. Residue Asp-608 participates in L-homocysteine binding. Asp-608 is a binding site for L-methionine. Glu-614 provides a ligand contact to 5-methyltetrahydropteroyltri-L-glutamate. Zn(2+)-binding residues include His-650, Cys-652, and Glu-674. The active-site Proton donor is His-703. Residue Cys-735 coordinates Zn(2+).

The protein belongs to the vitamin-B12 independent methionine synthase family. It depends on Zn(2+) as a cofactor.

The catalysed reaction is 5-methyltetrahydropteroyltri-L-glutamate + L-homocysteine = tetrahydropteroyltri-L-glutamate + L-methionine. The protein operates within amino-acid biosynthesis; L-methionine biosynthesis via de novo pathway; L-methionine from L-homocysteine (MetE route): step 1/1. Its function is as follows. Catalyzes the transfer of a methyl group from 5-methyltetrahydrofolate to homocysteine resulting in methionine formation. This is 5-methyltetrahydropteroyltriglutamate--homocysteine methyltransferase from Burkholderia cenocepacia (strain HI2424).